Consider the following 198-residue polypeptide: FMN-dependent NADH:quinone oxidoreductase (198 aa).

Residue Ser-10 participates in FMN binding.

It belongs to the azoreductase type 1 family. In terms of assembly, homodimer. FMN serves as cofactor.

The enzyme catalyses 2 a quinone + NADH + H(+) = 2 a 1,4-benzosemiquinone + NAD(+). It carries out the reaction N,N-dimethyl-1,4-phenylenediamine + anthranilate + 2 NAD(+) = 2-(4-dimethylaminophenyl)diazenylbenzoate + 2 NADH + 2 H(+). Its function is as follows. Quinone reductase that provides resistance to thiol-specific stress caused by electrophilic quinones. Functionally, also exhibits azoreductase activity. Catalyzes the reductive cleavage of the azo bond in aromatic azo compounds to the corresponding amines. The sequence is that of FMN-dependent NADH:quinone oxidoreductase from Paraburkholderia phymatum (strain DSM 17167 / CIP 108236 / LMG 21445 / STM815) (Burkholderia phymatum).